Reading from the N-terminus, the 466-residue chain is 3-isopropylmalate dehydratase large subunit (466 aa).

Residues cysteine 347, cysteine 407, and cysteine 410 each coordinate [4Fe-4S] cluster.

Belongs to the aconitase/IPM isomerase family. LeuC type 1 subfamily. Heterodimer of LeuC and LeuD. [4Fe-4S] cluster is required as a cofactor.

It catalyses the reaction (2R,3S)-3-isopropylmalate = (2S)-2-isopropylmalate. The protein operates within amino-acid biosynthesis; L-leucine biosynthesis; L-leucine from 3-methyl-2-oxobutanoate: step 2/4. Catalyzes the isomerization between 2-isopropylmalate and 3-isopropylmalate, via the formation of 2-isopropylmaleate. The polypeptide is 3-isopropylmalate dehydratase large subunit (Shigella flexneri).